Reading from the N-terminus, the 992-residue chain is Disks large-associated protein 4 (992 aa).

Residues 1–20 (MKGLGDSRPRHLSDSLDPPH) are compositionally biased toward basic and acidic residues. Disordered regions lie at residues 1–30 (MKGL…TDRN), 47–66 (PGQN…QLPP), and 157–206 (LEGT…GWWS). The segment covering 162–171 (GKVGGNGSKK) has biased composition (gly residues). Residues 172-194 (GGMEDGKGRRAKSKERAKAGEPK) are compositionally biased toward basic and acidic residues. S206 and S207 each carry phosphoserine. R291 is subject to Omega-N-methylarginine. Residues 342–396 (STTLLSPRETDAAAEGPIPCRRMRSGSYIKAMGDEDSDESGGSPKPSPKTAARRQ) form a disordered region. Phosphoserine occurs at positions 378, 381, 388, 405, 415, and 421. Disordered regions lie at residues 527-751 (SVSL…GPRQ), 763-798 (SYGD…AQPG), and 915-992 (TPEK…QTRL). The segment covering 528-554 (VSLQSLSPPPSTGSLSNSRTLPSSSCL) has biased composition (low complexity). Positions 576–591 (VTVQSSTESAQDTYLD) are enriched in polar residues. S580, S581, S609, S611, S665, and S744 each carry phosphoserine. Residues 600-620 (TSQSGLSNSSDSLDSSTRPPS) show a composition bias toward low complexity. Residue T915 is modified to Phosphothreonine. 2 stretches are compositionally biased toward basic and acidic residues: residues 915-925 (TPEKRKEEKKP) and 940-958 (VSRD…EARK). A compositionally biased stretch (polar residues) spans 969 to 978 (VRQNSATESA). Position 973 is a phosphoserine (S973).

The protein belongs to the SAPAP family. Interacts with DLG1 and DLG4/PSD-95.

Its subcellular location is the membrane. In terms of biological role, may play a role in the molecular organization of synapses and neuronal cell signaling. Could be an adapter protein linking ion channel to the subsynaptic cytoskeleton. May induce enrichment of PSD-95/SAP90 at the plasma membrane. The chain is Disks large-associated protein 4 (DLGAP4) from Homo sapiens (Human).